A 251-amino-acid chain; its full sequence is Prolactin-7B1 (251 aa).

The signal sequence occupies residues 1–29 (MHLSLTQQCLWPLQILLVSNLLLWENVAA). Asparagine 73 carries an N-linked (GlcNAc...) asparagine glycan. 2 disulfide bridges follow: cysteine 100-cysteine 216 and cysteine 233-cysteine 241.

It belongs to the somatotropin/prolactin family.

It localises to the secreted. The polypeptide is Prolactin-7B1 (Prl7b1) (Rattus norvegicus (Rat)).